The following is a 208-amino-acid chain: Ypt/Rab-type GTPase ypt71 (208 aa).

Residues 17–23, 33–40, glycine 66, 124–127, and 158–160 contribute to the GTP site; these read SGVGKTC, FSREYKAT, NQID, and SAK. The Effector region signature appears at 37-45; sequence YKATIGADF. Residues cysteine 206 and cysteine 208 are each lipidated (S-geranylgeranyl cysteine). Cysteine 208 is modified (cysteine methyl ester).

This sequence belongs to the small GTPase superfamily. Rab family.

The protein resides in the vacuole membrane. Rab activation is generally mediated by a guanine exchange factor (GEF), while inactivation through hydrolysis of bound GTP is catalyzed by a GTPase activating protein (GAP). Functionally, ypt/Rab-type GTPases are key regulators of membrane trafficking and intracellular vesicular transport. They act as molecular switches that convert between GTP-bound and GDP-bound states, and regulate virtually all steps of membrane traffic from the formation of the transport vesicle at the donor membrane to its fusion at the target membrane. In the GDP-bound state, Ypt proteins are predominantly cytosolic, solubilized through the interaction with a GDP dissociation inhibitor (GDI). In the GTP-bound state, the proteins are membrane bound and interact with specific effector proteins that select cargo, promote vesicle movement, or verify the correct site of fusion. Act antagonistically to ypt7 in regulating vacuolar morphology, promoting vacuolar fission. This Schizosaccharomyces pombe (strain 972 / ATCC 24843) (Fission yeast) protein is Ypt/Rab-type GTPase ypt71 (ypt71).